Reading from the N-terminus, the 123-residue chain is uncharacterized protein (123 aa).

Residues Met-1–Gly-28 form a disordered region. Basic and acidic residues predominate over residues Lys-7–Thr-20.

This sequence belongs to the TUSC2 family.

This is an uncharacterized protein from Caenorhabditis elegans.